Reading from the N-terminus, the 95-residue chain is Small ribosomal subunit protein bS20 (95 aa).

2 disordered regions span residues 1–26 (MALR…RSRK) and 76–95 (KSRL…AQPA). Residues 80 to 95 (AKALNKAKAAQAAQPA) show a composition bias toward low complexity.

Belongs to the bacterial ribosomal protein bS20 family.

Binds directly to 16S ribosomal RNA. This chain is Small ribosomal subunit protein bS20, found in Deinococcus geothermalis (strain DSM 11300 / CIP 105573 / AG-3a).